We begin with the raw amino-acid sequence, 219 residues long: MCPARSLLLVATLVLLDYLSLARNLSVATPGPEMFPCLHHSQNLLKAASNTLQKARQILEFYPCTSEEIDHEDITKDKTSTVEACLPLELIKNESCLNSRETSVITKGSCLASRKTSFMMALCLRSIYEDLQIYQVEFKTMNAKLLMDPKRQIFLDQNILGVIDELMQALNFNSETVPQKSSLEEPDFYKTKIRLCILLHAFRIRAVTIDRVMSYLNAS.

Positions 1-22 (MCPARSLLLVATLVLLDYLSLA) are cleaved as a signal peptide. N-linked (GlcNAc...) asparagine glycosylation is found at Asn-24 and Asn-93. 3 disulfide bridges follow: Cys-37–Cys-110, Cys-64–Cys-196, and Cys-85–Cys-123.

It belongs to the IL-6 superfamily. In terms of assembly, heterodimer with IL12B; disulfide-linked. This heterodimer is known as interleukin IL-12. Heterodimer with EBI3/IL27B; not disulfide-linked. This heterodimer is known as interleukin IL-35. Interacts with NBR1; this interaction promotes IL-12 secretion.

It localises to the secreted. In terms of biological role, heterodimerizes with IL12B to form the IL-12 cytokine or with EBI3/IL27B to form the IL-35 cytokine. IL-12 is primarily produced by professional antigen-presenting cells (APCs) such as B-cells and dendritic cells (DCs) as well as macrophages and granulocytes and regulates T-cell and natural killer-cell responses, induces the production of interferon-gamma (IFN-gamma), favors the differentiation of T-helper 1 (Th1) cells and is an important link between innate resistance and adaptive immunity. Mechanistically, exerts its biological effects through a receptor composed of IL12R1 and IL12R2 subunits. Binding to the receptor results in the rapid tyrosine phosphorylation of a number of cellular substrates including the JAK family kinases TYK2 and JAK2. In turn, recruited STAT4 gets phosphorylated and translocates to the nucleus where it regulates cytokine/growth factor responsive genes. As part of IL-35, plays essential roles in maintaining the immune homeostasis of the liver microenvironment and also functions as an immune-suppressive cytokine. Mediates biological events through unconventional receptors composed of IL12RB2 and gp130/IL6ST heterodimers or homodimers. Signaling requires the transcription factors STAT1 and STAT4, which form a unique heterodimer that binds to distinct DNA sites. The protein is Interleukin-12 subunit alpha (IL12A) of Papio anubis (Olive baboon).